A 240-amino-acid chain; its full sequence is Purine nucleoside phosphorylase DeoD-type (240 aa).

His5 contributes to the a purine D-ribonucleoside binding site. Phosphate-binding positions include Gly21, Arg25, Arg44, and 88-91 (RVGS). A purine D-ribonucleoside contacts are provided by residues 181-183 (EME) and 205-206 (SD). Catalysis depends on Asp206, which acts as the Proton donor.

The protein belongs to the PNP/UDP phosphorylase family. As to quaternary structure, homohexamer; trimer of homodimers.

It carries out the reaction a purine D-ribonucleoside + phosphate = a purine nucleobase + alpha-D-ribose 1-phosphate. It catalyses the reaction a purine 2'-deoxy-D-ribonucleoside + phosphate = a purine nucleobase + 2-deoxy-alpha-D-ribose 1-phosphate. In terms of biological role, catalyzes the reversible phosphorolytic breakdown of the N-glycosidic bond in the beta-(deoxy)ribonucleoside molecules, with the formation of the corresponding free purine bases and pentose-1-phosphate. This is Purine nucleoside phosphorylase DeoD-type from Enterobacter sp. (strain 638).